We begin with the raw amino-acid sequence, 178 residues long: Mediator of RNA polymerase II transcription subunit 28 (178 aa).

The segment at 1-44 (MAAPLGGMFSGQPPGPPQAPPGLPGQASLLQAAPGAPRPSSSTL) is disordered. Positions 13 to 23 (PPGPPQAPPGL) are enriched in pro residues. Residues 109 to 145 (QVIKEDVSELRNELQRKDALVQKHLTKLRHWQQVLED) are a coiled coil.

Belongs to the Mediator complex subunit 28 family. In terms of assembly, component of the Mediator complex, which is composed of MED1, MED4, MED6, MED7, MED8, MED9, MED10, MED11, MED12, MED13, MED13L, MED14, MED15, MED16, MED17, MED18, MED19, MED20, MED21, MED22, MED23, MED24, MED25, MED26, MED27, MED29, MED30, MED31, CCNC, CDK8 and CDC2L6/CDK11. The MED12, MED13, CCNC and CDK8 subunits form a distinct module termed the CDK8 module. Mediator containing the CDK8 module is less active than Mediator lacking this module in supporting transcriptional activation. Individual preparations of the Mediator complex lacking one or more distinct subunits have been variously termed ARC, CRSP, DRIP, PC2, SMCC and TRAP. Forms a ternary complex with NF2/merlin and GRB2. Binds to actin. As to expression, widely expressed. Highly expressed in vascular tissues such as placenta, testis and liver.

It localises to the nucleus. The protein localises to the cytoplasm. The protein resides in the membrane. Component of the Mediator complex, a coactivator involved in the regulated transcription of nearly all RNA polymerase II-dependent genes. Mediator functions as a bridge to convey information from gene-specific regulatory proteins to the basal RNA polymerase II transcription machinery. Mediator is recruited to promoters by direct interactions with regulatory proteins and serves as a scaffold for the assembly of a functional preinitiation complex with RNA polymerase II and the general transcription factors. May be part of a complex containing NF2/merlin that participates in cellular signaling to the actin cytoskeleton downstream of tyrosine kinase signaling pathways. This chain is Mediator of RNA polymerase II transcription subunit 28 (MED28), found in Homo sapiens (Human).